The sequence spans 606 residues: NADH-ubiquinone oxidoreductase chain 5 (606 aa).

The next 16 membrane-spanning stretches (helical) occupy residues 1–21 (MNLF…PIMV), 35–55 (YVKN…MMYL), 87–107 (LMFM…SMWY), 114–134 (INQF…LVTA), 140–160 (LFIG…WWFG), 171–191 (AILY…WFLS), 211–233 (FPLM…HPWL), 241–261 (TPVS…FLLV), 272–292 (LIQT…AICA), 301–320 (IIAF…IGLN), 325–347 (AFLH…GSII), 366–386 (LPFT…MPFL), 413–433 (LTAT…ALLG), 457–477 (LLIG…PVIT), 482–502 (MPLH…IIAF), and 582–602 (GLIK…MILF).

It belongs to the complex I subunit 5 family. As to quaternary structure, core subunit of respiratory chain NADH dehydrogenase (Complex I) which is composed of 45 different subunits.

It is found in the mitochondrion inner membrane. It carries out the reaction a ubiquinone + NADH + 5 H(+)(in) = a ubiquinol + NAD(+) + 4 H(+)(out). Its function is as follows. Core subunit of the mitochondrial membrane respiratory chain NADH dehydrogenase (Complex I) which catalyzes electron transfer from NADH through the respiratory chain, using ubiquinone as an electron acceptor. Essential for the catalytic activity and assembly of complex I. In Balaenoptera musculus (Blue whale), this protein is NADH-ubiquinone oxidoreductase chain 5 (MT-ND5).